Reading from the N-terminus, the 465-residue chain is VGFKAGVKDYKLNYYTPDYETKDTDILAAFRVTPQPGVPPEEAGAAVAAESSTGTWTAVWTDGLTSLDRYKGRCYHIEPVAGEENQYIAYVAYPLDLFEEGSVTNMFTSIVGNVFGFKALRALRLEDLRIPPAYSKTFQGPPHGIQVERDKLNKYGRPLLGCTIKPKLGLSAKNYGRAVYECLRGGLDFTKDDENVNSQPFMRWRDRFLFCAEALYKAQAETGEIKGHYLNATAGTCEEMIKRAVFARELGVPIVMHDYLTGGFTANTSLAHYCRDNGLLLHIHRAMHAVIDRQKNHGIHFRVLAKALRMSGGDHIHAGTVVGKLEGERDITLGFVDLLRDDFVEKDRSRGIYFTQDWVSLPGVLPVASGGIHVWHMPALTEIFGDDSVLQFGGGTLGHPWGNAPGAVANRVALEACVRARNEGRDLAREGNEIIREAAKWSPELAAACEVWKAIKFEFPAMDTL.

At Lys4 the chain carries N6,N6,N6-trimethyllysine. Substrate is bound by residues Asn113 and Thr163. Lys165 (proton acceptor) is an active-site residue. Substrate is bound at residue Lys167. Residues Lys191, Asp193, and Glu194 each coordinate Mg(2+). Position 191 is an N6-carboxylysine (Lys191). The Proton acceptor role is filled by His284. Substrate-binding residues include Arg285, His317, and Ser369.

It belongs to the RuBisCO large chain family. Type I subfamily. Heterohexadecamer of 8 large chains and 8 small chains; disulfide-linked. The disulfide link is formed within the large subunit homodimers. The cofactor is Mg(2+). The disulfide bond which can form in the large chain dimeric partners within the hexadecamer appears to be associated with oxidative stress and protein turnover.

The protein resides in the plastid. It is found in the chloroplast. It catalyses the reaction 2 (2R)-3-phosphoglycerate + 2 H(+) = D-ribulose 1,5-bisphosphate + CO2 + H2O. The catalysed reaction is D-ribulose 1,5-bisphosphate + O2 = 2-phosphoglycolate + (2R)-3-phosphoglycerate + 2 H(+). RuBisCO catalyzes two reactions: the carboxylation of D-ribulose 1,5-bisphosphate, the primary event in carbon dioxide fixation, as well as the oxidative fragmentation of the pentose substrate in the photorespiration process. Both reactions occur simultaneously and in competition at the same active site. The protein is Ribulose bisphosphate carboxylase large chain of Eucommia ulmoides (Hardy rubber tree).